The following is a 554-amino-acid chain: Carboxypeptidase Y homolog A (554 aa).

Residues 1–17 (MRVAASTVLLGVASAAS) form the signal peptide. Positions 18–137 (FQQQTQHVLS…KLADFNLRVK (120 aa)) are excised as a propeptide. 5 disulfide bridges follow: Cys-191-Cys-431, Cys-325-Cys-339, Cys-349-Cys-372, Cys-356-Cys-365, and Cys-394-Cys-401. The N-linked (GlcNAc...) asparagine glycan is linked to Asn-222. Ser-278 is a catalytic residue. The active site involves Asp-470. N-linked (GlcNAc...) asparagine glycosylation occurs at Asn-518. His-529 is an active-site residue.

The protein belongs to the peptidase S10 family.

It is found in the vacuole. The enzyme catalyses Release of a C-terminal amino acid with broad specificity.. Functionally, vacuolar carboxypeptidase involved in degradation of small peptides. Digests preferentially peptides containing an aliphatic or hydrophobic residue in P1' position, as well as methionine, leucine or phenylalanine in P1 position of ester substrate. This is Carboxypeptidase Y homolog A (CPYA) from Podospora anserina (strain S / ATCC MYA-4624 / DSM 980 / FGSC 10383) (Pleurage anserina).